Here is a 574-residue protein sequence, read N- to C-terminus: UvrABC system protein C (574 aa).

The GIY-YIG domain maps to 12–92 (KKPGVYIFKN…IYIHKPKYNI (81 aa)). The UVR domain occupies 200 to 235 (EEVKNYLQKAMMDYAKIKNYEKAAQMRDTLFKLENL).

This sequence belongs to the UvrC family. In terms of assembly, interacts with UvrB in an incision complex.

It is found in the cytoplasm. Its function is as follows. The UvrABC repair system catalyzes the recognition and processing of DNA lesions. UvrC both incises the 5' and 3' sides of the lesion. The N-terminal half is responsible for the 3' incision and the C-terminal half is responsible for the 5' incision. This chain is UvrABC system protein C, found in Petrotoga mobilis (strain DSM 10674 / SJ95).